Here is a 537-residue protein sequence, read N- to C-terminus: CTP synthase (537 aa).

The tract at residues 1 to 268 (MPFKCIFLTG…ANFIGEKLKL (268 aa)) is amidoligase domain. Ser14 serves as a coordination point for CTP. Residue Ser14 participates in UTP binding. Residues 15-20 (SLGKGL) and Asp72 each bind ATP. Mg(2+) is bound by residues Asp72 and Glu142. CTP contacts are provided by residues 149 to 151 (DIE), 188 to 193 (KSKPTQ), and Lys224. Residues 188–193 (KSKPTQ) and Lys224 contribute to the UTP site. Residues 293–533 (KIGVVGKYVQ…IEAALVYSKD (241 aa)) form the Glutamine amidotransferase type-1 domain. Gly352 contributes to the L-glutamine binding site. Cys379 (nucleophile; for glutamine hydrolysis) is an active-site residue. L-glutamine-binding positions include 380–383 (LGMQ), Glu403, and Arg461. Catalysis depends on residues His506 and Glu508.

It belongs to the CTP synthase family. As to quaternary structure, homotetramer.

It carries out the reaction UTP + L-glutamine + ATP + H2O = CTP + L-glutamate + ADP + phosphate + 2 H(+). The catalysed reaction is L-glutamine + H2O = L-glutamate + NH4(+). It catalyses the reaction UTP + NH4(+) + ATP = CTP + ADP + phosphate + 2 H(+). It participates in pyrimidine metabolism; CTP biosynthesis via de novo pathway; CTP from UDP: step 2/2. Allosterically activated by GTP, when glutamine is the substrate; GTP has no effect on the reaction when ammonia is the substrate. The allosteric effector GTP functions by stabilizing the protein conformation that binds the tetrahedral intermediate(s) formed during glutamine hydrolysis. Inhibited by the product CTP, via allosteric rather than competitive inhibition. Catalyzes the ATP-dependent amination of UTP to CTP with either L-glutamine or ammonia as the source of nitrogen. Regulates intracellular CTP levels through interactions with the four ribonucleotide triphosphates. This Chlamydia pneumoniae (Chlamydophila pneumoniae) protein is CTP synthase.